The primary structure comprises 65 residues: Large ribosomal subunit protein bL35 (65 aa).

The disordered stretch occupies residues 1–22 (MPKIKTLRSAAKRFKKTASGKF). The segment covering 10 to 22 (AAKRFKKTASGKF) has biased composition (basic residues).

This sequence belongs to the bacterial ribosomal protein bL35 family.

The sequence is that of Large ribosomal subunit protein bL35 from Buchnera aphidicola subsp. Schizaphis graminum (strain Sg).